Reading from the N-terminus, the 243-residue chain is Large ribosomal subunit protein uL2 (243 aa).

A disordered region spans residues 198–243; it reads VDHPFGGGGRQHPGKPKSVSRDTPPGRKVGDIASKRTGRGGKGGQE. A compositionally biased stretch (basic and acidic residues) spans 221-231; sequence PPGRKVGDIAS.

It belongs to the universal ribosomal protein uL2 family. As to quaternary structure, part of the 50S ribosomal subunit. Forms a bridge to the 30S subunit in the 70S ribosome.

In terms of biological role, one of the primary rRNA binding proteins. Required for association of the 30S and 50S subunits to form the 70S ribosome, for tRNA binding and peptide bond formation. It has been suggested to have peptidyltransferase activity; this is somewhat controversial. Makes several contacts with the 16S rRNA in the 70S ribosome. This Natronomonas pharaonis (strain ATCC 35678 / DSM 2160 / CIP 103997 / JCM 8858 / NBRC 14720 / NCIMB 2260 / Gabara) (Halobacterium pharaonis) protein is Large ribosomal subunit protein uL2.